The following is a 138-amino-acid chain: Large ribosomal subunit protein uL16 (138 aa).

The protein belongs to the universal ribosomal protein uL16 family. Part of the 50S ribosomal subunit.

Its function is as follows. Binds 23S rRNA and is also seen to make contacts with the A and possibly P site tRNAs. The sequence is that of Large ribosomal subunit protein uL16 from Mycoplasma genitalium (strain ATCC 33530 / DSM 19775 / NCTC 10195 / G37) (Mycoplasmoides genitalium).